Consider the following 223-residue polypeptide: Cytidylate kinase (223 aa).

12–20 (GPAGSGKST) contributes to the ATP binding site.

This sequence belongs to the cytidylate kinase family. Type 1 subfamily.

Its subcellular location is the cytoplasm. It catalyses the reaction CMP + ATP = CDP + ADP. It carries out the reaction dCMP + ATP = dCDP + ADP. This chain is Cytidylate kinase, found in Onion yellows phytoplasma (strain OY-M).